The sequence spans 446 residues: Zinc finger protein BALDIBIS (446 aa).

The segment at 20–53 is disordered; sequence EHIAPNPNPNPNPTSSNSAKRKRNLPGNPDPDAE. Phosphoserine is present on Ser58. 2 C2H2-type zinc fingers span residues 68–90 and 110–140; these read FICE…RRGH and YICP…SRKH. Residues 132 to 139 carry the Nuclear localization signal motif; it reads IKKHFSRK. The C2H2-type 2; degenerate zinc finger occupies 145–168; it reads WKCDKCSKKYAVMSDWKAHSKICG. Residues Cys147, Cys150, His163, Cys167, Cys174, Cys176, His189, and Cys193 each contribute to the Zn(2+) site. Residues 172 to 195 form a CCHC-type 2; atypical zinc finger; that stretch reads YRCDCGTLFSRKDSFITHRAFCDA. Residues 182-194 are SHR-binding; that stretch reads RKDSFITHRAFCD. The disordered stretch occupies residues 425–446; sequence HNLPDSSPPASTDGTPTADMNQ. The segment covering 427–446 has biased composition (polar residues); sequence LPDSSPPASTDGTPTADMNQ.

In terms of assembly, binds to RGA and SCL3 competitively in the nucleus. In terms of tissue distribution, expressed in roots, especially in vascular initials, cortex, endodermis, and quiescent center (QC).

The protein localises to the nucleus. Transcription factor that, together with JKD, regulates tissue boundaries and asymmetric cell division in roots by a rapid up-regulation of 'SCARECROW' (SCR), thus controlling the nuclear localization of 'SHORT-ROOT' (SHR) and restricting its action. Confines CYCD6 expression to the cortex-endodermis initial/daughter (CEI/CEID) tissues. Binds DNA via its zinc fingers. Recognizes and binds to SCL3 promoter sequence 5'-AGACAA-3' to promote its expression when in complex with RGA. This chain is Zinc finger protein BALDIBIS, found in Arabidopsis thaliana (Mouse-ear cress).